Here is a 288-residue protein sequence, read N- to C-terminus: Protein shisa-2 (288 aa).

Residues 1-23 form the signal peptide; it reads MWLEGSPLAVLAAVSFLLSVLAA. Topologically, residues 24-110 are extracellular; the sequence is AQGSGEYCHG…DSTAVPIYVP (87 aa). A helical membrane pass occupies residues 111–131; the sequence is FLIVGSVFVAFIIVGSLVAIC. Over 132–288 the chain is Cytoplasmic; sequence CCRCLRPKQE…EQMMYPAVTV (157 aa). Residues 161–188 show a composition bias toward low complexity; that stretch reads SSASTSRGSSSRQSSTAASSSSSANSGA. Residues 161 to 198 are disordered; that stretch reads SSASTSRGSSSRQSSTAASSSSSANSGARPPPTRSQTN.

This sequence belongs to the shisa family. Interacts with fzd8 and fgfr1.

Its subcellular location is the endoplasmic reticulum membrane. Its function is as follows. Plays an essential role in the maturation of presomitic mesoderm cells by individual attenuation of both fgf and wnt signaling. Inhibits both wnt and fgf signaling through the regulation of protein maturation and cell surface transportation of their receptors within the endoplasmic reticulum. This Xenopus laevis (African clawed frog) protein is Protein shisa-2 (shisa2).